A 488-amino-acid polypeptide reads, in one-letter code: Membrane-bound lytic murein transglycosylase F (488 aa).

The first 25 residues, 1 to 25 (MFARPAIRMRCATGLLAIGTLLMLA), serve as a signal peptide directing secretion. The interval 26-269 (GCGEEPKPSV…RLKERYYGHV (244 aa)) is non-LT domain. The LT domain stretch occupies residues 270–488 (DVLGYVGAYT…RTLDEQTPPL (219 aa)). Glu-316 is a catalytic residue.

In the N-terminal section; belongs to the bacterial solute-binding protein 3 family. It in the C-terminal section; belongs to the transglycosylase Slt family.

The protein localises to the cell outer membrane. The catalysed reaction is Exolytic cleavage of the (1-&gt;4)-beta-glycosidic linkage between N-acetylmuramic acid (MurNAc) and N-acetylglucosamine (GlcNAc) residues in peptidoglycan, from either the reducing or the non-reducing ends of the peptidoglycan chains, with concomitant formation of a 1,6-anhydrobond in the MurNAc residue.. Functionally, murein-degrading enzyme that degrades murein glycan strands and insoluble, high-molecular weight murein sacculi, with the concomitant formation of a 1,6-anhydromuramoyl product. Lytic transglycosylases (LTs) play an integral role in the metabolism of the peptidoglycan (PG) sacculus. Their lytic action creates space within the PG sacculus to allow for its expansion as well as for the insertion of various structures such as secretion systems and flagella. The chain is Membrane-bound lytic murein transglycosylase F from Ectopseudomonas mendocina (strain ymp) (Pseudomonas mendocina).